The primary structure comprises 247 residues: Adenosylcobinamide-GDP ribazoletransferase (247 aa).

5 helical membrane-spanning segments follow: residues 34–54 (IVMF…IFIL), 59–79 (CGIP…TGGF), 113–133 (GGLA…ELAL), 138–158 (MLAA…LLMY), and 187–207 (LAVI…AMVV).

This sequence belongs to the CobS family. The cofactor is Mg(2+).

The protein localises to the cell inner membrane. It carries out the reaction alpha-ribazole + adenosylcob(III)inamide-GDP = adenosylcob(III)alamin + GMP + H(+). The enzyme catalyses alpha-ribazole 5'-phosphate + adenosylcob(III)inamide-GDP = adenosylcob(III)alamin 5'-phosphate + GMP + H(+). Its pathway is cofactor biosynthesis; adenosylcobalamin biosynthesis; adenosylcobalamin from cob(II)yrinate a,c-diamide: step 7/7. Joins adenosylcobinamide-GDP and alpha-ribazole to generate adenosylcobalamin (Ado-cobalamin). Also synthesizes adenosylcobalamin 5'-phosphate from adenosylcobinamide-GDP and alpha-ribazole 5'-phosphate. This Salmonella dublin (strain CT_02021853) protein is Adenosylcobinamide-GDP ribazoletransferase.